The chain runs to 287 residues: MDKIKIALQYMMPKHLISRLVGKLAAAELGSITTAAIKWFIKQYKIDMSEAAQSEPEAYTTFNNFFTRALKPGIRPLFDDKDYIVHPVDGAISQCGPIKGDQIFQAKGHEYSSLALLGNQADDAKRFEDGDFATIYLAPKDYHRIHMPIKGTLSKMTYVPGDLFSVNPLTAENVPGLFARNERVVALFETEIGPMAMVLVGATIVASIETVWAGTVTPPAGKKVFTWDYPTEGPDVITLDKGDEMGRFKLGSTVVMLFAKDALDEFAKDVVPKAVTRMGQPFAKIED.

Residues aspartate 89, histidine 146, and serine 252 each act as charge relay system; for autoendoproteolytic cleavage activity in the active site. Serine 252 functions as the Schiff-base intermediate with substrate; via pyruvic acid; for decarboxylase activity in the catalytic mechanism. Serine 252 carries the pyruvic acid (Ser); by autocatalysis modification.

This sequence belongs to the phosphatidylserine decarboxylase family. PSD-B subfamily. Prokaryotic type I sub-subfamily. As to quaternary structure, heterodimer of a large membrane-associated beta subunit and a small pyruvoyl-containing alpha subunit. It depends on pyruvate as a cofactor. Post-translationally, is synthesized initially as an inactive proenzyme. Formation of the active enzyme involves a self-maturation process in which the active site pyruvoyl group is generated from an internal serine residue via an autocatalytic post-translational modification. Two non-identical subunits are generated from the proenzyme in this reaction, and the pyruvate is formed at the N-terminus of the alpha chain, which is derived from the carboxyl end of the proenzyme. The autoendoproteolytic cleavage occurs by a canonical serine protease mechanism, in which the side chain hydroxyl group of the serine supplies its oxygen atom to form the C-terminus of the beta chain, while the remainder of the serine residue undergoes an oxidative deamination to produce ammonia and the pyruvoyl prosthetic group on the alpha chain. During this reaction, the Ser that is part of the protease active site of the proenzyme becomes the pyruvoyl prosthetic group, which constitutes an essential element of the active site of the mature decarboxylase.

The protein resides in the cell membrane. It carries out the reaction a 1,2-diacyl-sn-glycero-3-phospho-L-serine + H(+) = a 1,2-diacyl-sn-glycero-3-phosphoethanolamine + CO2. It participates in phospholipid metabolism; phosphatidylethanolamine biosynthesis; phosphatidylethanolamine from CDP-diacylglycerol: step 2/2. Functionally, catalyzes the formation of phosphatidylethanolamine (PtdEtn) from phosphatidylserine (PtdSer). This is Phosphatidylserine decarboxylase proenzyme from Shewanella sediminis (strain HAW-EB3).